Reading from the N-terminus, the 27-residue chain is Caerulein precursor fragment R7 (27 aa).

Expressed by the skin glands.

It localises to the secreted. Antimicrobial peptide. This chain is Caerulein precursor fragment R7, found in Xenopus ruwenzoriensis (Uganda clawed frog).